The following is a 549-amino-acid chain: Oxygen-dependent choline dehydrogenase (549 aa).

FAD is bound at residue 4 to 33; that stretch reads DFVIIGSGSAGSAMAYRLSEDGRYSVIVIE. Residue His465 is the Proton acceptor of the active site.

It belongs to the GMC oxidoreductase family. It depends on FAD as a cofactor.

It carries out the reaction choline + A = betaine aldehyde + AH2. It catalyses the reaction betaine aldehyde + NAD(+) + H2O = glycine betaine + NADH + 2 H(+). It participates in amine and polyamine biosynthesis; betaine biosynthesis via choline pathway; betaine aldehyde from choline (cytochrome c reductase route): step 1/1. Involved in the biosynthesis of the osmoprotectant glycine betaine. Catalyzes the oxidation of choline to betaine aldehyde and betaine aldehyde to glycine betaine at the same rate. The chain is Oxygen-dependent choline dehydrogenase from Brucella ovis (strain ATCC 25840 / 63/290 / NCTC 10512).